A 365-amino-acid chain; its full sequence is tRNA(Met) cytidine acetate ligase (365 aa).

Residues 7 to 20 (IAEF…HKYL), glycine 96, asparagine 152, and arginine 175 contribute to the ATP site.

Belongs to the TmcAL family.

It localises to the cytoplasm. The catalysed reaction is cytidine(34) in elongator tRNA(Met) + acetate + ATP = N(4)-acetylcytidine(34) in elongator tRNA(Met) + AMP + diphosphate. Functionally, catalyzes the formation of N(4)-acetylcytidine (ac(4)C) at the wobble position of elongator tRNA(Met), using acetate and ATP as substrates. First activates an acetate ion to form acetyladenylate (Ac-AMP) and then transfers the acetyl group to tRNA to form ac(4)C34. The sequence is that of tRNA(Met) cytidine acetate ligase from Streptococcus pneumoniae (strain JJA).